Reading from the N-terminus, the 487-residue chain is Solute carrier family 22 member 15-like (487 aa).

Residues 23 to 43 form a helical membrane-spanning segment; sequence FLTLLQIYVACQSMLIVLVGA. A glycan (N-linked (GlcNAc...) asparagine) is linked at Asn-70. The next 11 membrane-spanning stretches (helical) occupy residues 90 to 110, 117 to 137, 141 to 161, 178 to 198, 203 to 223, 286 to 306, 315 to 335, 345 to 365, 374 to 394, 408 to 428, and 435 to 455; these read LASS…GPLS, PVYL…ALAP, VFAV…LVSF, SLTN…GFYI, TLAF…FVLP, ILLM…TLNA, LNVA…LYFI, ATAG…FVPE, TVLA…VYIY, LGVC…IPAM, and MPFV…LLLP.

Belongs to the major facilitator (TC 2.A.1) superfamily. Organic cation transporter (TC 2.A.1.19) family.

It localises to the membrane. Functionally, probably transports organic cations. The chain is Solute carrier family 22 member 15-like (slc22a15b) from Xenopus laevis (African clawed frog).